The following is a 367-amino-acid chain: Choline-phosphate cytidylyltransferase A (367 aa).

Position 1 is an N-acetylmethionine (Met-1). The interval Met-1–Pro-31 is disordered. Lys-8 carries the post-translational modification N6-acetyllysine. 4 residues coordinate CTP: Ile-84, Phe-85, His-92, and Lys-122. Lys-122 and Trp-151 together coordinate phosphocholine. Residues His-168, Asp-169, Tyr-173, Gln-195, Arg-196, Thr-197, and Ile-200 each coordinate CTP. Amphipathic regions lie at residues Lys-228 to Gly-287 and Ala-298 to Ser-315. Ser-233 is subject to Phosphoserine. An autoinhibitory (AI) region spans residues Ile-272 to Phe-293. The interval Ala-313–Asp-367 is disordered. Ser-315 carries the phosphoserine; by PKC modification. Residues Ser-315–Pro-324 are compositionally biased toward polar residues. Ser-319, Ser-321, Ser-322, and Ser-323 each carry phosphoserine. The stretch at Ser-319–Pro-324 is repeat 1. Residues Ser-319–Pro-348 form a 3 X repeats region. Thr-325 carries the post-translational modification Phosphothreonine. 2 positions are modified to phosphoserine: Ser-329 and Ser-331. The 2; approximate repeat unit spans residues Ser-329 to Ser-333. The span at Pro-330–Ser-352 shows a compositional bias: low complexity. Ser-333 is modified (phosphoserine; by PKC). Thr-342 carries the phosphothreonine modification. A phosphoserine mark is found at Ser-343, Ser-345, Ser-346, Ser-347, Ser-350, and Ser-352. The stretch at Ser-343 to Pro-348 is repeat 3. Residue Thr-358 is modified to Phosphothreonine. Phosphoserine; by CK2 is present on Ser-362.

It belongs to the cytidylyltransferase family. As to quaternary structure, homodimer. The serine residues of the C-terminus are phosphorylated. The inactive soluble form is stabilized by phosphorylation, the active membrane bound form is promoted by anionic lipids or diacylglycerol, and is stabilized by dephosphorylation. Post-translationally, the N-terminus is blocked. In terms of processing, monoubiquitinated by the SCF(FBXL2) complex, leading to proteasomal degradation.

It localises to the cytoplasm. Its subcellular location is the cytosol. The protein localises to the membrane. It is found in the endoplasmic reticulum membrane. The protein resides in the nucleus. It catalyses the reaction phosphocholine + CTP + H(+) = CDP-choline + diphosphate. The protein operates within phospholipid metabolism; phosphatidylcholine biosynthesis; phosphatidylcholine from phosphocholine: step 1/2. Interconverts between an inactive cytosolic form and an active membrane-bound form. Activation involves disruption of an inhibitory interaction between helices at the base of the active site and the autoinhibitory (AI) region. Activated by N-methylethanolamine. Activated by oleic acid-containing phosphatidylcholine vesicles. Catalyzes the key rate-limiting step in the CDP-choline pathway for phosphatidylcholine biosynthesis. In Rattus norvegicus (Rat), this protein is Choline-phosphate cytidylyltransferase A (Pcyt1a).